Consider the following 957-residue polypeptide: MAHYITFLCMVLVLLLQNSVLAEDGEVRSSCRTAPTDLVFILDGSYSVGPENFEIVKKWLVNITKNFDIGPKFIQVGVVQYSDYPVLEIPLGSYDSGEHLTAAVESILYLGGNTKTGKAIQFALDYLFAKSSRFLTKIAVVLTDGKSQDDVKDAAQAARDSKITLFAIGVGSETEDAELRAIANKPSSTYVFYVEDYIAISKIREVMKQKLCEESVCPTRIPVAARDERGFDILLGLDVNKKVKKRIQLSPKKIKGYEVTSKVDLSELTSNVFPEGLPPSYVFVSTQRFKVKKIWDLWRILTIDGRPQIAVTLNGVDKILLFTTTSVINGSQVVTFANPQVKTLFDEGWHQIRLLVTEQDVTLYIDDQQIENKPLHPVLGILINGQTQIGKYSGKEETVQFDVQKLRIYCDPEQNNRETACEIPGFNGECLNGPSDVGSTPAPCICPPGKPGLQGPKGDPGLPGNPGYPGQPGQDGKPGYQGIAGTPGVPGSPGIQGARGLPGYKGEPGRDGDKGDRGLPGFPGLHGMPGSKGEMGAKGDKGSPGFYGKKGAKGEKGNAGFPGLPGPAGEPGRHGKDGLMGSPGFKGEAGSPGAPGQDGTRGEPGIPGFPGNRGLMGQKGEIGPPGQQGKKGAPGMPGLMGSNGSPGQPGTPGSKGSKGEPGIQGMPGASGLKGEPGATGSPGEPGYMGLPGIQGKKGDKGNQGEKGIQGQKGENGRQGIPGQQGIQGHHGAKGERGEKGEPGVRGAIGSKGESGVDGLMGPAGPKGQPGDPGPQGPPGLDGKPGREFSEQFIRQVCTDVIRAQLPVLLQSGRIRNCDHCLSQHGSPGIPGPPGPIGPEGPRGLPGLPGRDGVPGLVGVPGRPGVRGLKGLPGRNGEKGSQGFGYPGEQGPPGPPGPEGPPGISKEGPPGDPGLPGKDGDHGKPGIQGQPGPPGICDPSLCFSVIARRDPFRKGPNY.

An N-terminal signal peptide occupies residues 1–22 (MAHYITFLCMVLVLLLQNSVLA). The VWFA domain maps to 37–211 (DLVFILDGSY…KIREVMKQKL (175 aa)). N-linked (GlcNAc...) asparagine glycosylation is present at Asn62. Residues 230-412 (GFDILLGLDV…VQKLRIYCDP (183 aa)) form the Laminin G-like domain. Collagen-like domains are found at residues 448–500 (PGKP…GARG), 501–542 (LPGY…GDKG), and 543–594 (SPGF…SPGA). 2 disordered regions span residues 448 to 786 (PGKP…KPGR) and 825 to 938 (GSPG…ICDP). Composition is skewed to low complexity over residues 451–462 (PGLQGPKGDPGL) and 471–481 (QPGQDGKPGYQ). The span at 507 to 517 (EPGRDGDKGDR) shows a compositional bias: basic and acidic residues. Composition is skewed to low complexity over residues 618–637 (QKGEIGPPGQQGKKGAPGMP) and 705–729 (EKGIQGQKGENGRQGIPGQQGIQGH). Collagen-like domains are found at residues 681-733 (SPGE…HGAK), 734-787 (GERG…PGRE), 825-882 (GSPG…GSQG), and 884-934 (GYPG…GPPG). Over residues 732 to 742 (AKGERGEKGEP) the composition is skewed to basic and acidic residues. The segment covering 829-838 (IPGPPGPIGP) has biased composition (pro residues). Residues 839–874 (EGPRGLPGLPGRDGVPGLVGVPGRPGVRGLKGLPGR) are compositionally biased toward low complexity. Over residues 889–900 (QGPPGPPGPEGP) the composition is skewed to pro residues.

Belongs to the fibril-associated collagens with interrupted helices (FACIT) family. In terms of tissue distribution, highly expressed in lymph node, jejunum, pancreas, stomach, trachea, testis, uterus and placenta; moderately expressed in brain, colon, lung, prostate, spinal cord, salivary gland and vascular smooth-muscle cells and very weakly expressed in heart, liver, kidney, bone marrow, spleen, thymus, skeletal muscle, adrenal gland and peripheral leukocytes. Expression in heart was higher in the right ventricle and atrium than in the left ventricle and atrium.

The protein resides in the secreted. It is found in the extracellular space. It localises to the extracellular matrix. Its subcellular location is the cytoplasm. This Homo sapiens (Human) protein is Collagen alpha-1(XXI) chain (COL21A1).